The following is a 52-amino-acid chain: Proteinase inhibitor (52 aa).

A Pyrrolidone carboxylic acid modification is found at glutamine 1. 4 disulfides stabilise this stretch: cysteine 3/cysteine 40, cysteine 6/cysteine 24, cysteine 7/cysteine 36, and cysteine 13/cysteine 49.

This sequence belongs to the protease inhibitor I20 (potato type II proteinase inhibitor) family.

It localises to the secreted. This is Proteinase inhibitor from Solanum melongena (Eggplant).